The primary structure comprises 111 residues: Anti-adapter protein IraM (111 aa).

The protein belongs to the IraM/RssC family.

It is found in the cytoplasm. In terms of biological role, inhibits RpoS proteolysis by regulating RssB activity, thereby increasing the stability of the sigma stress factor RpoS during magnesium starvation. This is Anti-adapter protein IraM from Escherichia coli O127:H6 (strain E2348/69 / EPEC).